A 334-amino-acid polypeptide reads, in one-letter code: Thiamine-binding periplasmic protein (334 aa).

A signal peptide spans 1-23; that stretch reads MRLLSLLTFSLFAVIGLAPAAQA. Thiamine contacts are provided by residues 64-65, 166-167, W202, and 220-223; these read DG, AT, and YTTS.

This sequence belongs to the bacterial solute-binding protein 1 family. As to quaternary structure, the complex is composed of two ATP-binding proteins (ThiQ), two transmembrane proteins (ThiP) and a solute-binding protein (ThiB).

Its subcellular location is the periplasm. Part of the ABC transporter complex ThiBPQ involved in thiamine import. The sequence is that of Thiamine-binding periplasmic protein (thiB) from Brucella abortus biovar 1 (strain 9-941).